The sequence spans 361 residues: MLYSLITQLIDQYSFLNVFKYLTFRTGLSMFTSMFVVLLIGTPFIKFFSARKILNPIRDDGPTEHIVKKIGTPTMGGVLILLGLFSGILLWGDLSNYHIWFLLFIVSGFGLLGAYDDYKKIKFKNSSGVSFKFKIISQILIAIVGIYGLTQLSQNTELTNLYFPFFKNLIINLGWFFIPFSIFIIVGSSNAVNLTDGLDGLATVPVILVAACFAFISYVTGNIVFSEYLNIPYLEGMGEVSVFCGSIIGACLGFLWFNAPPAKIFMGDTGSLALGGSLGAIGIITKHEIVLAITGGLFVLEAVSVIIQVFSFKLTGKRIFRMAPIHHHFEKKGWAESTVVIRFWIISIILAMIGLATLKLR.

10 helical membrane passes run 28-48, 70-90, 94-114, 129-149, 169-189, 205-225, 237-257, 264-284, 289-309, and 338-358; these read LSMF…IKFF, IGTP…GILL, LSNY…LLGA, VSFK…IYGL, LIIN…VGSS, PVIL…NIVF, MGEV…FLWF, IFMG…IGII, IVLA…IIQV, and TVVI…LATL.

It belongs to the glycosyltransferase 4 family. MraY subfamily. Mg(2+) is required as a cofactor.

Its subcellular location is the cell inner membrane. The enzyme catalyses UDP-N-acetyl-alpha-D-muramoyl-L-alanyl-gamma-D-glutamyl-meso-2,6-diaminopimeloyl-D-alanyl-D-alanine + di-trans,octa-cis-undecaprenyl phosphate = di-trans,octa-cis-undecaprenyl diphospho-N-acetyl-alpha-D-muramoyl-L-alanyl-D-glutamyl-meso-2,6-diaminopimeloyl-D-alanyl-D-alanine + UMP. Its pathway is cell wall biogenesis; peptidoglycan biosynthesis. Functionally, catalyzes the initial step of the lipid cycle reactions in the biosynthesis of the cell wall peptidoglycan: transfers peptidoglycan precursor phospho-MurNAc-pentapeptide from UDP-MurNAc-pentapeptide onto the lipid carrier undecaprenyl phosphate, yielding undecaprenyl-pyrophosphoryl-MurNAc-pentapeptide, known as lipid I. In Pelagibacter ubique (strain HTCC1062), this protein is Phospho-N-acetylmuramoyl-pentapeptide-transferase.